The chain runs to 658 residues: MPSSVTKHTIPPFYACYFLRSLSTPGTTYIGSTPAPPRRKRQHNGHLTQGAYKTSRARPWEMECIVYGFSSKIAALQFEWAWAKPHLSRHLKFLTTEHSVDGTPKNTSDWAGMSLFPSTSLTPGQTRWGRPKKRMARPPSSPNARLLAMRALLRSEPFCGWGLKLAFFTEWSWLAYQRLDACDPGLVAKSALSTLQNRYSRSGKPLHALYPVAVCDFSGVDGKREPLVHVSEPYRLDAGVAEHPVKKRQTSSRQKPHTEETSAWPETLPRSANLKGLDACMQDFATFPIPQPAAPNTDLTKKSKRAKKLSDKARPSALEDHDAENGVDDDDTEVEVVATDAANGSDLALSRPLYRMRFDDLNMEESEWKRFAESIAANVGASRSTTQAMSEFLHTCVQRHIAAQDARTANTALPAPTSLCSLCSIPIDLSQQLDFVLCPNPHASTLPLISSSSTASHETISECRETGCDSIFHLSCLARSFLEQQLGDQKATASSASTVLPTHGTCPCHRGEHKEPTMWADVVRAMYRRHERFERLIQFLIRSGRSLEQHLHPPLEVEMTVKGSKIKERVKASVKATEDAQVDIGDQRQVISGTTSRTKAALTRKRRQPTTSSVNAIQVDPLARNGSKIDGDGAGKDTKKNTTQKAKSNETSEVIDLT.

Positions 12-92 (PFYACYFLRS…AKPHLSRHLK (81 aa)) constitute a GIY-YIG domain. Disordered regions lie at residues 29–52 (YIGS…QGAY), 239–269 (GVAE…ETLP), 288–328 (PIPQ…NGVD), and 594–658 (TTSR…IDLT). 2 stretches are compositionally biased toward basic and acidic residues: residues 308–324 (KLSD…HDAE) and 627–640 (SKID…DTKK). Residues 641-652 (NTTQKAKSNETS) are compositionally biased toward polar residues.

Belongs to the SLX1 family. In terms of assembly, forms a heterodimer with SLX4. A divalent metal cation serves as cofactor.

The protein localises to the nucleus. Functionally, catalytic subunit of the SLX1-SLX4 structure-specific endonuclease that resolves DNA secondary structures generated during DNA repair and recombination. Has endonuclease activity towards branched DNA substrates, introducing single-strand cuts in duplex DNA close to junctions with ss-DNA. This chain is Structure-specific endonuclease subunit SLX1, found in Mycosarcoma maydis (Corn smut fungus).